The sequence spans 334 residues: MERCSVAQQFEDRFHRKFYYLRLSVTDVCNFKCTYCLPDGYQPSGQKNSSFLNLSEIRRVVKAFADCGTSKVRITGGEPSLRKDFTDIIHTVASTQGIKRVATTTNGYRMEKHIGEWKEAGLNQINVSVDSLDPRMFHQITGENKFHQVMSGIDRAFEVGFEQVKVNVVLMKDLNHNELPAFLHWIKHRPIQLRFIELMQTGEMDTLFQQHHVSGVAIRNHLIANGWLLKVKAANDGPAQVFVHPDYQGEIGLIMPYEKDFCASCNRLRVSAKGKLHLCLFGDRGVELRDLMQQDDQEPDLIARIQSELQTKSVSHFLNEGQTGMTPHLASIGG.

Residues 13-239 (RFHRKFYYLR…KVKAANDGPA (227 aa)) enclose the Radical SAM core domain. Arg-22 is a GTP binding site. Positions 29 and 33 each coordinate [4Fe-4S] cluster. S-adenosyl-L-methionine is bound at residue Tyr-35. Cys-36 provides a ligand contact to [4Fe-4S] cluster. Residue Arg-73 participates in GTP binding. S-adenosyl-L-methionine is bound at residue Gly-77. Residue Thr-104 coordinates GTP. S-adenosyl-L-methionine is bound at residue Ser-128. Lys-165 contributes to the GTP binding site. Residue Met-199 coordinates S-adenosyl-L-methionine. Residues Cys-262 and Cys-265 each coordinate [4Fe-4S] cluster. Position 267-269 (267-269 (RLR)) interacts with GTP. Residue Cys-279 coordinates [4Fe-4S] cluster.

The protein belongs to the radical SAM superfamily. MoaA family. Monomer and homodimer. It depends on [4Fe-4S] cluster as a cofactor.

The catalysed reaction is GTP + AH2 + S-adenosyl-L-methionine = (8S)-3',8-cyclo-7,8-dihydroguanosine 5'-triphosphate + 5'-deoxyadenosine + L-methionine + A + H(+). The protein operates within cofactor biosynthesis; molybdopterin biosynthesis. Its function is as follows. Catalyzes the cyclization of GTP to (8S)-3',8-cyclo-7,8-dihydroguanosine 5'-triphosphate. In Vibrio vulnificus (strain YJ016), this protein is GTP 3',8-cyclase.